A 662-amino-acid chain; its full sequence is Translation factor guf1, mitochondrial (662 aa).

Residues 1–42 constitute a mitochondrion transit peptide; sequence MRGCLQLARWLSAAPNWPASSLLKAPGSSFATRLFTTTSSYK. Residues 64-244 enclose the tr-type G domain; that stretch reads ERYRNFCIVA…TVVEKIPAPI (181 aa). GTP contacts are provided by residues 73-80, 137-141, and 191-194; these read AHVDHGKS, DTPGH, and NKVD.

This sequence belongs to the TRAFAC class translation factor GTPase superfamily. Classic translation factor GTPase family. LepA subfamily.

It localises to the mitochondrion inner membrane. It carries out the reaction GTP + H2O = GDP + phosphate + H(+). Its function is as follows. Promotes mitochondrial protein synthesis. May act as a fidelity factor of the translation reaction, by catalyzing a one-codon backward translocation of tRNAs on improperly translocated ribosomes. Binds to mitochondrial ribosomes in a GTP-dependent manner. The chain is Translation factor guf1, mitochondrial (guf1) from Emericella nidulans (strain FGSC A4 / ATCC 38163 / CBS 112.46 / NRRL 194 / M139) (Aspergillus nidulans).